The sequence spans 525 residues: GMP synthase [glutamine-hydrolyzing] (525 aa).

In terms of domain architecture, Glutamine amidotransferase type-1 spans 9–207; it reads RILILDFGSQ…VRDICQCEAL (199 aa). The active-site Nucleophile is Cys86. Active-site residues include His181 and Glu183. Positions 208–400 constitute a GMPS ATP-PPase domain; sequence WTPAKIIDDA…LGLPYNMLYR (193 aa). An ATP-binding site is contributed by 235–241; that stretch reads SGGVDSS.

Homodimer.

It carries out the reaction XMP + L-glutamine + ATP + H2O = GMP + L-glutamate + AMP + diphosphate + 2 H(+). It functions in the pathway purine metabolism; GMP biosynthesis; GMP from XMP (L-Gln route): step 1/1. Its function is as follows. Catalyzes the synthesis of GMP from XMP. The sequence is that of GMP synthase [glutamine-hydrolyzing] from Pectobacterium carotovorum subsp. carotovorum (strain PC1).